The chain runs to 370 residues: Pyruvate dehydrogenase E1 component subunit alpha (370 aa).

Heterodimer of an alpha and a beta chain. Requires thiamine diphosphate as cofactor.

The catalysed reaction is N(6)-[(R)-lipoyl]-L-lysyl-[protein] + pyruvate + H(+) = N(6)-[(R)-S(8)-acetyldihydrolipoyl]-L-lysyl-[protein] + CO2. Functionally, the pyruvate dehydrogenase complex catalyzes the overall conversion of pyruvate to acetyl-CoA and CO(2). It contains multiple copies of three enzymatic components: pyruvate dehydrogenase (E1), dihydrolipoamide acetyltransferase (E2) and lipoamide dehydrogenase (E3). This Staphylococcus aureus (strain COL) protein is Pyruvate dehydrogenase E1 component subunit alpha (pdhA).